Reading from the N-terminus, the 393-residue chain is Stimulated by retinoic acid gene 8 protein (393 aa).

The span at 1 to 11 (MATPGEGNQPS) shows a compositional bias: polar residues. A disordered region spans residues 1-25 (MATPGEGNQPSDDGAPQPLAQLQKL). The short motif at 28–33 (RVVRRR) is the Nuclear localization signal (NLS) element. The stretch at 66-95 (QVLNRTKIHIQEQEESLDKLLKLKASFNLQ) forms a coiled coil. The disordered stretch occupies residues 124 to 201 (FLQDSPPEWF…EEKKVDLSHS (78 aa)). Acidic residues predominate over residues 141–192 (DAEEEGEEEGEEEGEEGEEEEEGDEEGEEEEENGEEREVEEYQEEEEEEEEE). The short motif at 209–218 (LMEFERYLNF) is the Nuclear export signal (NES) element.

As to quaternary structure, interacts with XPO1. Interacts with MEIOSIN. In terms of processing, phosphorylated in P19 EC cells. Expressed exclusively in premeiotic germ cells in both sexes. In females, is expressed in the embryonic ovary. In males, is expressed in pubertal and adult testes, in premeiotic spermatogenic cells. Expressed by some type A and B spermatogonia, preleptotene spermatocytes, and early leptotene spermatocytes (at protein level). Expression begins in late undifferentiated spermatogonia and persists during differentiating spermatogonia (at protein level).

The protein resides in the cytoplasm. It is found in the nucleus. Meiosis-inducer required for the transition into meiosis for both female and male germ cells. In female germ cells, acts downstream of ZGLP1 as a key effector of the meiotic program: required for premeiotic DNA replication and subsequent events in meiotic prophase. During spermatogenesis, next to its role in meiotic initiation, promotes (but is not required for) spermatogonial differentiation. In complex with MEIOSIN, directly activates the transcription of a subset of critical meiotic genes playing a central role in cell-cycle switching from mitosis to meiosis. This chain is Stimulated by retinoic acid gene 8 protein, found in Mus musculus (Mouse).